The sequence spans 453 residues: Bifunctional protein GlmU (453 aa).

A pyrophosphorylase region spans residues 1–231; that stretch reads MERTCLAIIL…EVEMTGCNNR (231 aa). UDP-N-acetyl-alpha-D-glucosamine is bound by residues 10-13, K24, Q77, 82-83, 105-107, G143, E157, N172, and N229; these read LAAG, GT, and YGD. Mg(2+) is bound at residue D107. A Mg(2+)-binding site is contributed by N229. The interval 232 to 252 is linker; that stretch reads AELAFIERLWQERRRHELMLS. The tract at residues 253 to 453 is N-acetyltransferase; the sequence is GVTMIAPETV…AIKAAKKGSH (201 aa). UDP-N-acetyl-alpha-D-glucosamine is bound by residues R318 and K336. The active-site Proton acceptor is H348. Positions 351 and 362 each coordinate UDP-N-acetyl-alpha-D-glucosamine. Acetyl-CoA-binding positions include A365, 371-372, S390, S408, and R425; that span reads NY.

It in the N-terminal section; belongs to the N-acetylglucosamine-1-phosphate uridyltransferase family. This sequence in the C-terminal section; belongs to the transferase hexapeptide repeat family. As to quaternary structure, homotrimer. It depends on Mg(2+) as a cofactor.

It localises to the cytoplasm. It catalyses the reaction alpha-D-glucosamine 1-phosphate + acetyl-CoA = N-acetyl-alpha-D-glucosamine 1-phosphate + CoA + H(+). The catalysed reaction is N-acetyl-alpha-D-glucosamine 1-phosphate + UTP + H(+) = UDP-N-acetyl-alpha-D-glucosamine + diphosphate. It functions in the pathway nucleotide-sugar biosynthesis; UDP-N-acetyl-alpha-D-glucosamine biosynthesis; N-acetyl-alpha-D-glucosamine 1-phosphate from alpha-D-glucosamine 6-phosphate (route II): step 2/2. The protein operates within nucleotide-sugar biosynthesis; UDP-N-acetyl-alpha-D-glucosamine biosynthesis; UDP-N-acetyl-alpha-D-glucosamine from N-acetyl-alpha-D-glucosamine 1-phosphate: step 1/1. Its pathway is bacterial outer membrane biogenesis; LPS lipid A biosynthesis. Its function is as follows. Catalyzes the last two sequential reactions in the de novo biosynthetic pathway for UDP-N-acetylglucosamine (UDP-GlcNAc). The C-terminal domain catalyzes the transfer of acetyl group from acetyl coenzyme A to glucosamine-1-phosphate (GlcN-1-P) to produce N-acetylglucosamine-1-phosphate (GlcNAc-1-P), which is converted into UDP-GlcNAc by the transfer of uridine 5-monophosphate (from uridine 5-triphosphate), a reaction catalyzed by the N-terminal domain. The sequence is that of Bifunctional protein GlmU from Rhizobium rhizogenes (strain K84 / ATCC BAA-868) (Agrobacterium radiobacter).